Reading from the N-terminus, the 327-residue chain is MTIEEAKQHILEGGKITEEQALSLANHPDKEALYEAAHQITRHFMGNKFDTCSIINAKSGNCSEDCKWCAQSGHYKTLVNLYPLLPAKECVYHAVYNRKQGIRRFALVTSGKRVSDKELEQITDTIRQIKRQSDIKCCASMGLLTRSQLQSLYDSGVENYHCNIETAPSYFRQLCSTHTIEQKMETIHTAREIGFRICCGGIIGMGETMKERIEMACFLQKEGVLSIPLNLLQPIPGTPMENTQILEEEEWLTTIALFRLINPNAFLRFSGGRAQLSEVTQRKSLHIGINSAIIGDLLTTIGSKVEEDKVLFTSEGYSLTENTDWEK.

A Radical SAM core domain is found at 44–273 (FMGNKFDTCS…NAFLRFSGGR (230 aa)). [4Fe-4S] cluster-binding residues include Cys-62, Cys-66, and Cys-69. The [2Fe-2S] cluster site is built by Cys-138, Cys-198, and Arg-268.

This sequence belongs to the radical SAM superfamily. Biotin synthase family. As to quaternary structure, homodimer. [4Fe-4S] cluster serves as cofactor. [2Fe-2S] cluster is required as a cofactor.

It carries out the reaction (4R,5S)-dethiobiotin + (sulfur carrier)-SH + 2 reduced [2Fe-2S]-[ferredoxin] + 2 S-adenosyl-L-methionine = (sulfur carrier)-H + biotin + 2 5'-deoxyadenosine + 2 L-methionine + 2 oxidized [2Fe-2S]-[ferredoxin]. It participates in cofactor biosynthesis; biotin biosynthesis; biotin from 7,8-diaminononanoate: step 2/2. Catalyzes the conversion of dethiobiotin (DTB) to biotin by the insertion of a sulfur atom into dethiobiotin via a radical-based mechanism. This chain is Biotin synthase, found in Parabacteroides distasonis (strain ATCC 8503 / DSM 20701 / CIP 104284 / JCM 5825 / NCTC 11152).